A 65-amino-acid chain; its full sequence is Large ribosomal subunit protein bL35 (65 aa).

Belongs to the bacterial ribosomal protein bL35 family.

This is Large ribosomal subunit protein bL35 from Blochmanniella pennsylvanica (strain BPEN).